The sequence spans 77 residues: UPF0248 protein Pcal_0252 (77 aa).

This sequence belongs to the UPF0248 family.

This Pyrobaculum calidifontis (strain DSM 21063 / JCM 11548 / VA1) protein is UPF0248 protein Pcal_0252.